The chain runs to 1494 residues: Ral GTPase-activating protein subunit beta (1494 aa).

2 disordered regions span residues 355-437 (PRSD…APRR) and 709-738 (ENNL…PDSE). At serine 359 the chain carries Phosphoserine. 2 positions are modified to phosphothreonine: threonine 363 and threonine 379. 3 stretches are compositionally biased toward polar residues: residues 369–381 (SMPQ…TTPP), 392–428 (NKAT…TSSE), and 711–735 (NLKS…PTTP). Phosphoserine is present on residues serine 421 and serine 720. Threonine 734 carries the post-translational modification Phosphothreonine. The 244-residue stretch at 1149–1392 (IGYLDLLPCR…TTLEKEVPVI (244 aa)) folds into the Rap-GAP domain. Serine 1285 carries the phosphoserine modification. Positions 1312–1323 (NLNSSQRLSPSS) are enriched in polar residues. The segment at 1312-1335 (NLNSSQRLSPSSRMRKLPQGRPVP) is disordered.

As to quaternary structure, component of the heterodimeric RalGAP1 complex with RALGAPA1 and of the heterodimeric RalGAP2 complex with RALGAPA2. Heterodimerization is required for activity. Highly expressed in brain, mostly in amygdala.

Its function is as follows. Non-catalytic subunit of the heterodimeric RalGAP1 and RalGAP2 complexes which act as GTPase activators for the Ras-like small GTPases RALA and RALB. The chain is Ral GTPase-activating protein subunit beta (RALGAPB) from Homo sapiens (Human).